The primary structure comprises 468 residues: Hydroxymethylglutaryl-CoA lyase, mitochondrial (468 aa).

In terms of domain architecture, Pyruvate carboxyltransferase spans 168-435; the sequence is VKIVEVGPRD…HTNVDLGKLI (268 aa). A substrate-binding site is contributed by Arg-176. A divalent metal cation contacts are provided by Asp-177, His-368, and His-370. Residue Cys-401 is part of the active site. A divalent metal cation is bound at residue Asn-410.

This sequence belongs to the HMG-CoA lyase family. Homodimer. The cofactor is a divalent metal cation.

It localises to the mitochondrion matrix. It carries out the reaction (3S)-3-hydroxy-3-methylglutaryl-CoA = acetoacetate + acetyl-CoA. The protein operates within metabolic intermediate metabolism; (S)-3-hydroxy-3-methylglutaryl-CoA degradation; acetoacetate from (S)-3-hydroxy-3-methylglutaryl-CoA: step 1/1. Functionally, involved in the catabolism of branched amino acids such as leucine. The protein is Hydroxymethylglutaryl-CoA lyase, mitochondrial (HMGCL) of Arabidopsis thaliana (Mouse-ear cress).